A 265-amino-acid chain; its full sequence is Arginine and glutamate-rich protein 1 (265 aa).

Positions 1–54 are enriched in basic residues; it reads MGRSRSRSSSRSKHAKSGKHNKKRSRSREKERVRKRSKSRESKRNRRRESRSRS. Positions 1-66 are necessary and sufficient for RNA binding; that stretch reads MGRSRSRSSS…NTASRRERER (66 aa). Residues 1-106 form a disordered region; it reads MGRSRSRSSS…EKKAEYERQR (106 aa). Basic and acidic residues-rich tracts occupy residues 60–76 and 85–106; these read SRRERERAASPPDRIDI and SSLDEKQKREDEEKKAEYERQR. The tract at residues 67–265 is necessary and sufficient for transcriptional regulation; sequence AASPPDRIDI…KLSFSLKSPD (199 aa). Residues 164 to 168 carry the LXXLL motif 1; degenerate motif; sequence LLEEL. An LXXLL motif 2; degenerate motif is present at residues 193-197; it reads LERIL. A compositionally biased stretch (basic and acidic residues) spans 229–245; sequence RMKLEQERQRQQKEEQK. Positions 229-265 are disordered; sequence RMKLEQERQRQQKEEQKIILGKGKSRPKLSFSLKSPD.

It belongs to the ARGLU1 family.

Its subcellular location is the nucleus. It is found in the nucleus speckle. The protein resides in the chromosome. Its function is as follows. Dual function regulator of gene expression; regulator of transcription and modulator of alternative splicing. General coactivator of nuclear receptor-induced gene expression. This Xenopus tropicalis (Western clawed frog) protein is Arginine and glutamate-rich protein 1 (arglu1).